Consider the following 118-residue polypeptide: Large ribosomal subunit protein bL20 (118 aa).

Belongs to the bacterial ribosomal protein bL20 family.

In terms of biological role, binds directly to 23S ribosomal RNA and is necessary for the in vitro assembly process of the 50S ribosomal subunit. It is not involved in the protein synthesizing functions of that subunit. This Francisella tularensis subsp. tularensis (strain FSC 198) protein is Large ribosomal subunit protein bL20.